The primary structure comprises 294 residues: Ribosomal protein L11 methyltransferase (294 aa).

Positions 147, 169, 191, and 231 each coordinate S-adenosyl-L-methionine.

This sequence belongs to the methyltransferase superfamily. PrmA family.

Its subcellular location is the cytoplasm. It catalyses the reaction L-lysyl-[protein] + 3 S-adenosyl-L-methionine = N(6),N(6),N(6)-trimethyl-L-lysyl-[protein] + 3 S-adenosyl-L-homocysteine + 3 H(+). Methylates ribosomal protein L11. The sequence is that of Ribosomal protein L11 methyltransferase from Dichelobacter nodosus (strain VCS1703A).